The chain runs to 1044 residues: R3H domain-containing protein 2 (1044 aa).

2 disordered regions span residues 23 to 71 (EESV…AKSN) and 106 to 147 (SCPS…QEYT). Basic and acidic residues predominate over residues 36–56 (PSKEDVEKEGEENGLRQETQR). Residue serine 37 is modified to Phosphoserine. Over residues 58-71 (TSSHGHARKRAKSN) the composition is skewed to basic residues. Residues 109-143 (SDKEEEKSTKDVSEKEDKDKSKEKVPRKMLSRDSS) are compositionally biased toward basic and acidic residues. Residue serine 143 is modified to Phosphoserine. An R3H domain is found at 169–232 (RMMLLKLEQE…AVIINKTSST (64 aa)). One can recognise an SUZ domain in the interval 233–303 (RIPEQRFSEH…VRERIFARET (71 aa)). 2 stretches are compositionally biased toward basic and acidic residues: residues 261–270 (DASMDRDDNQ) and 277–288 (DGRRSKSIEERE). Disordered regions lie at residues 261-288 (DASM…EERE), 320-408 (SSSS…LSRP), 433-485 (CTAQ…FSPS), 502-533 (MAED…LFQP), 551-600 (GQPL…SNQQ), 729-770 (GTSP…SPSG), and 807-848 (GQKP…SLSN). Positions 338 to 349 (SRTSSSRQSSTD) are enriched in low complexity. 3 positions are modified to phosphoserine: serine 362, serine 365, and serine 381. Over residues 433–449 (CTAQQQQQQQQQQQQLP) the composition is skewed to low complexity. Composition is skewed to polar residues over residues 509–521 (PFGQ…QGST) and 554–572 (LPTS…QQVL). A compositionally biased stretch (low complexity) spans 757–770 (PQMSQQYSGVSPSG). The span at 818–848 (GSPQANAQMGSSPVTSPTQSPAPSPVTSLSN) shows a compositional bias: polar residues. Serine 921 and serine 923 each carry phosphoserine. Threonine 924 and threonine 928 each carry phosphothreonine.

The protein localises to the nucleus. This is R3H domain-containing protein 2 (R3hdm2) from Mus musculus (Mouse).